The sequence spans 333 residues: Endo-1,4-beta-xylanase (333 aa).

A signal peptide spans 1-17 (MYLVAFMLLAILPTGYC). The region spanning 18-330 (QLNTLAVRAG…KPAYQGIVDG (313 aa)) is the GH10 domain. Glu-147 functions as the Proton donor in the catalytic mechanism. Catalysis depends on Glu-252, which acts as the Nucleophile.

It belongs to the glycosyl hydrolase 10 (cellulase F) family.

Its subcellular location is the secreted. The enzyme catalyses Endohydrolysis of (1-&gt;4)-beta-D-xylosidic linkages in xylans.. It functions in the pathway glycan degradation; xylan degradation. Has xylanase activity. Seems to be involved in the release of sugars from the hemicellulolytic fraction in the compost. The chain is Endo-1,4-beta-xylanase (xlnA) from Agaricus bisporus (White button mushroom).